We begin with the raw amino-acid sequence, 605 residues long: MANIIILDEFTAGQIAAGEVVERPVSVVKELVENSIDAGAGRIVVELEGGGLQAISVLDDGCGMSEEDLVLAFQRHATSKIKCSDDLNRITTLGFRGEALPSIAAVSKITVATRTRDALAGTRAEFAGGELIGKGPIGCPPGTSITVRDLFYNTPARRKAMKAPSAEGALCGGLISRLALARPEICFEVGIKGRRVFYSPGSGNLIDSLAAVYGRQIAAEMIAVKAVAEGLSINGYLGKPSLSRSTRSHITVIINGRYVRCPAIAEAIEGAYGTLLSRGRRPVAVLSLSVSPELLDVNIHPAKLEVRLLEEEKTASLLAGILKDALADKAVIPSAGNFRQAALRLENNKPGAEIFDGLGAGIIKTPGGGSSDRHVPGDKKNIQECLTLPDAHEYVADRVWVREAEDTPAYGNKVEKLPVLNALAHFPPVYILAGGEDGLYIVDQHAAHERIIYEEILSSGRTRPSQYLLVPVMLELDYREASILIERIIWFTDAGFVIEHFGGNTFLLRGVPFELPAGQEREIILDLLDYFESKGTGAGMTDFFKWAAASIACRSAVRAGEKLSLPSMNALLQRLSGTASPYTCPHGRPVVIKLSFRELELRFRR.

The protein belongs to the DNA mismatch repair MutL/HexB family.

Functionally, this protein is involved in the repair of mismatches in DNA. It is required for dam-dependent methyl-directed DNA mismatch repair. May act as a 'molecular matchmaker', a protein that promotes the formation of a stable complex between two or more DNA-binding proteins in an ATP-dependent manner without itself being part of a final effector complex. This chain is DNA mismatch repair protein MutL, found in Pelotomaculum thermopropionicum (strain DSM 13744 / JCM 10971 / SI).